A 159-amino-acid polypeptide reads, in one-letter code: MKIMIIQGPNVNMLGVREVGIYGAMKMEEIHEQMKLAASQNNVELDFFQSNFEGEIVDKIQECLGTVDGIIINAAGYTHTSVAIRDAIAAVALPTIEVHISNVYRREEFRQKNLIAPVCSGTIVGFGPFGYHLALMGIIQICEQIKNLRAMQQAQQTNK.

Tyrosine 22 (proton acceptor) is an active-site residue. Substrate is bound by residues asparagine 73, histidine 79, and aspartate 86. Histidine 99 serves as the catalytic Proton donor. Substrate-binding positions include 100-101 (IS) and arginine 110.

This sequence belongs to the type-II 3-dehydroquinase family. In terms of assembly, homododecamer.

The enzyme catalyses 3-dehydroquinate = 3-dehydroshikimate + H2O. It functions in the pathway metabolic intermediate biosynthesis; chorismate biosynthesis; chorismate from D-erythrose 4-phosphate and phosphoenolpyruvate: step 3/7. Its function is as follows. Catalyzes a trans-dehydration via an enolate intermediate. The polypeptide is 3-dehydroquinate dehydratase (Campylobacter jejuni subsp. doylei (strain ATCC BAA-1458 / RM4099 / 269.97)).